A 39-amino-acid chain; its full sequence is Omega-actinopoditoxin-Mb1a (39 aa).

3 disulfides stabilise this stretch: C4/C19, C11/C30, and C18/C38.

In terms of processing, contains 3 disulfide bonds. Expressed by the venom gland.

Its subcellular location is the secreted. Potent inhibitor of insect, but not mammalian, voltage-gated calcium channels (Cav). This is Omega-actinopoditoxin-Mb1a from Missulena bradleyi (Eastern mouse spider).